The primary structure comprises 464 residues: Non-neuronal cytoplasmic intermediate filament protein (464 aa).

Over residues 1 to 14 (MSTQTKKVTRTIIT) the composition is skewed to polar residues. The segment at 1 to 59 (MSTQTKKVTRTIITSSSGGGGGGGGGRASYSSSGRFSGGGGRMRAGGVTSRRSVGSSYS) is disordered. The head stretch occupies residues 1–101 (MSTQTKKVTR…RMTRAHEKQE (101 aa)). The span at 17–27 (SGGGGGGGGGR) shows a compositional bias: gly residues. Residues 45 to 59 (AGGVTSRRSVGSSYS) are compositionally biased toward low complexity. One can recognise an IF rod domain in the interval 98–413 (EKQELSHLND…KLLEGEEIRL (316 aa)). A coil 1A region spans residues 102–133 (LSHLNDRFASYIDKVRYLQERNSKLEAQIKIQ). Residues 134-144 (ESREAPNIKDL) are linker 1. A coil 1B region spans residues 145-237 (YEKELRDLRA…FLKRVHDEEI (93 aa)). The segment at 238–264 (RQLQDQLNESLTIVEVDSRAASTFAPG) is linker 2. The coil 2 stretch occupies residues 265–413 (PDLTEALREI…KLLEGEEIRL (149 aa)). The interval 414-464 (FGESKEGVQQTSSSSSSSYQYSMKSGSGGGGGGSSSGKQQVTVSVSSGEEK) is tail. The tract at residues 415–464 (GESKEGVQQTSSSSSSSYQYSMKSGSGGGGGGSSSGKQQVTVSVSSGEEK) is disordered. Positions 420-438 (GVQQTSSSSSSSYQYSMKS) are enriched in low complexity. A compositionally biased stretch (gly residues) spans 439 to 448 (GSGGGGGGSS). The segment covering 449–464 (SGKQQVTVSVSSGEEK) has biased composition (low complexity).

The protein belongs to the intermediate filament family. In terms of assembly, can form homopolymers.

It is found in the cytoplasm. The sequence is that of Non-neuronal cytoplasmic intermediate filament protein from Branchiostoma lanceolatum (Common lancelet).